The primary structure comprises 1746 residues: Tenascin (1746 aa).

Positions 1–22 (MGVVTRLLVGTFLASLALPAQG) are cleaved as a signal peptide. The segment at 23–185 (GVLKKVIRHK…CEPGWKGPNC (163 aa)) is involved in hexamer formation. Residue Asn38 is glycosylated (N-linked (GlcNAc...) asparagine). Phosphoserine is present on residues Ser65, Ser70, and Ser72. A glycan (O-linked (Xyl...) (chondroitin sulfate) serine) is linked at Ser72. Residues 118-145 (DVKELLSRLEELENLVSSLREQCTSGAG) adopt a coiled-coil conformation. N-linked (GlcNAc...) asparagine glycans are attached at residues Asn166 and Asn184. One can recognise an EGF-like 1; incomplete domain in the interval 174 to 186 (CVCEPGWKGPNCS). 14 consecutive EGF-like domains span residues 187-217 (EPEC…EDCS), 218-249 (QLAC…DCSR), 250-280 (ETCP…EDCN), 281-311 (EPLC…EDCG), 312-342 (ELIC…EDCG), 343-373 (RLAC…ADCS), 374-404 (ERRC…EDCG), 405-435 (ELRC…EDCS), 436-466 (QLRC…YDCS), 467-497 (EMSC…EDCR), 498-528 (ELRC…PDCA), 529-559 (DLAC…KDCG), 560-589 (QRRC…GLDC), and 590-620 (GQRS…GEDC). 42 cysteine pairs are disulfide-bonded: Cys190–Cys200, Cys194–Cys205, Cys207–Cys216, Cys221–Cys231, Cys225–Cys236, Cys238–Cys247, Cys252–Cys263, Cys256–Cys268, Cys270–Cys279, Cys284–Cys294, Cys288–Cys299, Cys301–Cys310, Cys315–Cys325, Cys319–Cys330, Cys332–Cys341, Cys346–Cys356, Cys350–Cys361, Cys363–Cys372, Cys377–Cys387, Cys381–Cys392, Cys394–Cys403, Cys408–Cys418, Cys412–Cys423, Cys425–Cys434, Cys439–Cys449, Cys443–Cys454, Cys456–Cys465, Cys470–Cys480, Cys474–Cys485, Cys487–Cys496, Cys501–Cys511, Cys505–Cys516, Cys518–Cys527, Cys532–Cys542, Cys536–Cys547, Cys549–Cys558, Cys563–Cys573, Cys567–Cys578, Cys580–Cys589, Cys594–Cys604, Cys598–Cys609, and Cys611–Cys620. N-linked (GlcNAc...) asparagine glycosylation occurs at Asn327. Fibronectin type-III domains follow at residues 625–717 (PPKD…TPEG), 718–801 (LKFK…VTTT), 805–894 (APSQ…TGLD), 895–988 (APRN…LDPP), 989–1075 (KDFR…AGEP), 1076–1166 (EIGN…EAEP), 1167–1256 (EVDN…TAMG), 1257–1346 (SPKE…ALDG), 1347–1433 (PSGL…TDLD), and 1434–1522 (SPRD…IGLL). Asn788 carries N-linked (GlcNAc...) asparagine glycosylation. At Thr905 the chain carries Phosphothreonine. N-linked (GlcNAc...) asparagine glycans are attached at residues Asn1034, Asn1079, and Asn1121. A glycan (N-linked (GlcNAc...) asparagine) is linked at Asn1354. The Fibrinogen C-terminal domain occupies 1520-1735 (GLLYPFPRDC…FAEMKLRPSN (216 aa)).

The protein belongs to the tenascin family. In terms of assembly, homohexamer; disulfide-linked. A homotrimer may be formed in the triple coiled-coil region and may be stabilized by disulfide rings at both ends. Two of such half-hexabrachions may be disulfide linked within the central globule. Interacts with CSPG4. Interacts (via the 3rd fibronectin type-III domain) with integrin ITGA9:ITGB1. In terms of tissue distribution, submaxillary glands and brain.

The protein resides in the secreted. It is found in the extracellular space. Its subcellular location is the extracellular matrix. Its function is as follows. Extracellular matrix protein implicated in guidance of migrating neurons as well as axons during development, synaptic plasticity as well as neuronal regeneration. Promotes neurite outgrowth from cortical neurons grown on a monolayer of astrocytes. Ligand for integrins alpha-8/beta-1, alpha-9/beta-1, alpha-V/beta-3 and alpha-V/beta-6. In tumors, stimulates angiogenesis by elongation, migration and sprouting of endothelial cells. The protein is Tenascin (TNC) of Sus scrofa (Pig).